The chain runs to 141 residues: Hemoglobin subunit alpha-A (141 aa).

Positions 1–141 constitute a Globin domain; the sequence is VLSASDKSNV…VGTVLTAKYR (141 aa). His58 provides a ligand contact to O2. His87 lines the heme b pocket.

Belongs to the globin family. As to quaternary structure, heterotetramer of two alpha chains and two beta chains. In terms of tissue distribution, red blood cells.

In terms of biological role, involved in oxygen transport from the lung to the various peripheral tissues. This chain is Hemoglobin subunit alpha-A (HBAA), found in Streptopelia orientalis (Eastern turtle dove).